A 338-amino-acid polypeptide reads, in one-letter code: Fructose-1,6-bisphosphatase class 1 (338 aa).

Positions 90, 112, 114, and 115 each coordinate Mg(2+). Residues 115–118 (DGSS), Asn207, and Lys273 each bind substrate. Glu279 provides a ligand contact to Mg(2+).

This sequence belongs to the FBPase class 1 family. In terms of assembly, homotetramer. It depends on Mg(2+) as a cofactor.

The protein localises to the cytoplasm. It catalyses the reaction beta-D-fructose 1,6-bisphosphate + H2O = beta-D-fructose 6-phosphate + phosphate. The protein operates within carbohydrate biosynthesis; gluconeogenesis. This is Fructose-1,6-bisphosphatase class 1 from Stenotrophomonas maltophilia (strain K279a).